We begin with the raw amino-acid sequence, 971 residues long: Isoleucine--tRNA ligase (971 aa).

The short motif at 60-70 (PYANGDLHIGH) is the 'HIGH' region element. E563 provides a ligand contact to L-isoleucyl-5'-AMP. Residues 604-608 (KMSKS) carry the 'KMSKS' region motif. K607 lines the ATP pocket. Zn(2+)-binding residues include C922, C925, C942, and C945.

This sequence belongs to the class-I aminoacyl-tRNA synthetase family. IleS type 1 subfamily. As to quaternary structure, monomer. Requires Zn(2+) as cofactor.

It localises to the cytoplasm. It carries out the reaction tRNA(Ile) + L-isoleucine + ATP = L-isoleucyl-tRNA(Ile) + AMP + diphosphate. Its function is as follows. Catalyzes the attachment of isoleucine to tRNA(Ile). As IleRS can inadvertently accommodate and process structurally similar amino acids such as valine, to avoid such errors it has two additional distinct tRNA(Ile)-dependent editing activities. One activity is designated as 'pretransfer' editing and involves the hydrolysis of activated Val-AMP. The other activity is designated 'posttransfer' editing and involves deacylation of mischarged Val-tRNA(Ile). The sequence is that of Isoleucine--tRNA ligase from Acaryochloris marina (strain MBIC 11017).